Consider the following 498-residue polypeptide: ATP synthase subunit beta, chloroplastic (498 aa).

T6 carries the post-translational modification Phosphothreonine. Position 13 is a phosphoserine (S13). 172-179 (GGAGVGKT) is an ATP binding site.

The protein belongs to the ATPase alpha/beta chains family. In terms of assembly, F-type ATPases have 2 components, CF(1) - the catalytic core - and CF(0) - the membrane proton channel. CF(1) has five subunits: alpha(3), beta(3), gamma(1), delta(1), epsilon(1). CF(0) has four main subunits: a(1), b(1), b'(1) and c(9-12).

Its subcellular location is the plastid. It localises to the chloroplast thylakoid membrane. The catalysed reaction is ATP + H2O + 4 H(+)(in) = ADP + phosphate + 5 H(+)(out). In terms of biological role, produces ATP from ADP in the presence of a proton gradient across the membrane. The catalytic sites are hosted primarily by the beta subunits. The chain is ATP synthase subunit beta, chloroplastic from Crucihimalaya wallichii (Rock-cress).